The chain runs to 346 residues: Tetraacyldisaccharide 4'-kinase (346 aa).

53-60 serves as a coordination point for ATP; it reads TCGGTGKT.

This sequence belongs to the LpxK family.

It catalyses the reaction a lipid A disaccharide + ATP = a lipid IVA + ADP + H(+). It participates in glycolipid biosynthesis; lipid IV(A) biosynthesis; lipid IV(A) from (3R)-3-hydroxytetradecanoyl-[acyl-carrier-protein] and UDP-N-acetyl-alpha-D-glucosamine: step 6/6. In terms of biological role, transfers the gamma-phosphate of ATP to the 4'-position of a tetraacyldisaccharide 1-phosphate intermediate (termed DS-1-P) to form tetraacyldisaccharide 1,4'-bis-phosphate (lipid IVA). The chain is Tetraacyldisaccharide 4'-kinase from Bartonella tribocorum (strain CIP 105476 / IBS 506).